Consider the following 269-residue polypeptide: Phosphatidylglycerol--prolipoprotein diacylglyceryl transferase (269 aa).

The next 7 helical transmembrane spans lie at 17-37 (LKIH…WLLA), 56-76 (LVFW…VLFY), 92-112 (WKGG…ALWF), 120-140 (FFEL…AGRI), 174-194 (PSQL…LWLY), 202-222 (MAVS…VEFV), and 237-257 (LTMG…LIWL). An a 1,2-diacyl-sn-glycero-3-phospho-(1'-sn-glycerol)-binding site is contributed by Arg-139.

The protein belongs to the Lgt family.

The protein localises to the cell inner membrane. It carries out the reaction L-cysteinyl-[prolipoprotein] + a 1,2-diacyl-sn-glycero-3-phospho-(1'-sn-glycerol) = an S-1,2-diacyl-sn-glyceryl-L-cysteinyl-[prolipoprotein] + sn-glycerol 1-phosphate + H(+). It participates in protein modification; lipoprotein biosynthesis (diacylglyceryl transfer). In terms of biological role, catalyzes the transfer of the diacylglyceryl group from phosphatidylglycerol to the sulfhydryl group of the N-terminal cysteine of a prolipoprotein, the first step in the formation of mature lipoproteins. The polypeptide is Phosphatidylglycerol--prolipoprotein diacylglyceryl transferase (Pseudomonas putida (strain W619)).